The primary structure comprises 43 residues: Kappa-actitoxin-Avd4p (43 aa).

Intrachain disulfides connect cysteine 4-cysteine 39, cysteine 6-cysteine 32, and cysteine 22-cysteine 40.

It localises to the secreted. It is found in the nematocyst. Blocks Kv3 voltage-gated potassium channels. Reduces blood pressure. The sequence is that of Kappa-actitoxin-Avd4p from Anemonia viridis (Snakelocks anemone).